Here is a 227-residue protein sequence, read N- to C-terminus: GRF-interacting factor 1 (227 aa).

The span at 124-139 (ALSPLQQQQQQQAAAA) shows a compositional bias: low complexity. 2 disordered regions span residues 124–160 (ALSPLQQQQQQQAAAAHGQLGMGSGGTTSGFSILHGE) and 188–227 (GGGGGGKEGSTSLSVDVRGANSGAQSGDGEYLKGTEEEGS). Positions 217-227 (EYLKGTEEEGS) are enriched in basic and acidic residues.

This sequence belongs to the SS18 family. In terms of assembly, interacts with GRF4. As to expression, highly expressed in internodes, nodes, developing spikelets and developing anthers. Expressed at low levels in roots and mature glumes.

Its subcellular location is the nucleus. It is found in the cytoplasm. Functionally, transcription coactivator that plays a role in the regulation of meristematic function in leaves, stems and inflorescences. May regulate leaf size, length of stem internodes, and seed size by promoting cell expansion. Transcription coactivator that plays a role in the regulation of grain size. Component of a network formed by the microRNA396 (miRNA396), the GRFs and their interacting factors (GIFs) acting in the regulation of meristem function, at least partially through the control of cell proliferation. Component of the miRNA396c-GRF4-GIF1 regulatory module that plays an important role in grain size determination. The sequence is that of GRF-interacting factor 1 from Oryza sativa subsp. japonica (Rice).